A 207-amino-acid polypeptide reads, in one-letter code: Guanylate kinase (207 aa).

Residues Gly-5–Arg-184 enclose the Guanylate kinase-like domain. Ala-12–Ser-19 provides a ligand contact to ATP.

Belongs to the guanylate kinase family.

The protein resides in the cytoplasm. It carries out the reaction GMP + ATP = GDP + ADP. In terms of biological role, essential for recycling GMP and indirectly, cGMP. In Shewanella violacea (strain JCM 10179 / CIP 106290 / LMG 19151 / DSS12), this protein is Guanylate kinase.